The following is a 378-amino-acid chain: Cobalt-precorrin-5B C(1)-methyltransferase (378 aa).

The protein belongs to the CbiD family.

The enzyme catalyses Co-precorrin-5B + S-adenosyl-L-methionine = Co-precorrin-6A + S-adenosyl-L-homocysteine. It functions in the pathway cofactor biosynthesis; adenosylcobalamin biosynthesis; cob(II)yrinate a,c-diamide from sirohydrochlorin (anaerobic route): step 6/10. Functionally, catalyzes the methylation of C-1 in cobalt-precorrin-5B to form cobalt-precorrin-6A. The sequence is that of Cobalt-precorrin-5B C(1)-methyltransferase from Tolumonas auensis (strain DSM 9187 / NBRC 110442 / TA 4).